The chain runs to 276 residues: 4-chlorobenzoyl coenzyme A dehalogenase-1 (276 aa).

Residue 66–71 (AGFDLE) participates in substrate binding. Residue H93 is the Proton acceptor of the active site. Residue G117 coordinates substrate. D148 acts as the Nucleophile in catalysis. Residue R261 coordinates substrate.

It belongs to the enoyl-CoA hydratase/isomerase family. In terms of assembly, homotetramer.

It catalyses the reaction 4-chlorobenzoyl-CoA + H2O = 4-hydroxybenzoyl-CoA + chloride + H(+). Its pathway is xenobiotic degradation; 4-chlorobenzoate degradation; 4-hydroxybenzoate from 4-chlorobenzoate: step 2/3. In terms of biological role, dehalogenates 4-chlorobenzoyl-CoA, 4-iodobenzoyl-CoA, 4-bromobenzoyl-CoA and, at a slower rate, 4-fluorobenzoyl-CoA. Does not dehalogenate 2-chlorobenzoyl-CoA or 3-chlorobenzoyl-CoA. The protein is 4-chlorobenzoyl coenzyme A dehalogenase-1 of Arthrobacter sp.